Reading from the N-terminus, the 858-residue chain is DNA mismatch repair protein MutS (858 aa).

Residue 603–610 (GPNMSGKS) participates in ATP binding.

It belongs to the DNA mismatch repair MutS family.

Functionally, this protein is involved in the repair of mismatches in DNA. It is possible that it carries out the mismatch recognition step. This protein has a weak ATPase activity. The sequence is that of DNA mismatch repair protein MutS from Streptococcus agalactiae serotype Ia (strain ATCC 27591 / A909 / CDC SS700).